The chain runs to 295 residues: MRRLTDSFILGLAKGAVIPGLYTFRMTEGRSPLGQIGVLITVAISFLLTFKRFDPRFYKPIGDFKIVFLSLMAPKLPSLLSAVVMICLIFSEMRLRMILSRCVMIMPSYSPAVFTGIMVSLFFKSQMFDDYSVLITAASLLPITVRYGWMIRSSGFLLGLQKYRPILKSTSFREVDLKCLVKFTVEFLLLFTMLWIGKMFLSMPKSNHLFFLTVVNNVFFKLNVFKAAACAVVAILSGLMMNVCLYRIIFEAFVGLGFSSIMLTLSSDLKDRSFYAGDLLNGFFCLVVCCMYFGV.

The next 8 membrane-spanning stretches (helical) occupy residues 4–24 (LTDS…LYTF), 31–51 (SPLG…LTFK), 66–86 (IVFL…VVMI), 103–123 (VMIM…SLFF), 183–203 (FTVE…FLSM), 218–238 (VFFK…ILSG), 243–263 (VCLY…SIML), and 274–294 (FYAG…MYFG).

The protein localises to the membrane. The protein is Protein U26 (U26) of Human herpesvirus 6A (strain Uganda-1102) (HHV-6 variant A).